The primary structure comprises 216 residues: Ribonuclease HII (216 aa).

In terms of domain architecture, RNase H type-2 spans 28–216 (DIVCGVDEAG…PVRAALDLIR (189 aa)). 3 residues coordinate a divalent metal cation: Asp34, Glu35, and Asp126.

This sequence belongs to the RNase HII family. Mn(2+) serves as cofactor. The cofactor is Mg(2+).

It localises to the cytoplasm. It catalyses the reaction Endonucleolytic cleavage to 5'-phosphomonoester.. Endonuclease that specifically degrades the RNA of RNA-DNA hybrids. The sequence is that of Ribonuclease HII from Burkholderia vietnamiensis (strain G4 / LMG 22486) (Burkholderia cepacia (strain R1808)).